The following is a 241-amino-acid chain: tRNA pseudouridine synthase A (241 aa).

Asp-53 acts as the Nucleophile in catalysis. A substrate-binding site is contributed by Tyr-110.

This sequence belongs to the tRNA pseudouridine synthase TruA family. In terms of assembly, homodimer.

It catalyses the reaction uridine(38/39/40) in tRNA = pseudouridine(38/39/40) in tRNA. Functionally, formation of pseudouridine at positions 38, 39 and 40 in the anticodon stem and loop of transfer RNAs. The chain is tRNA pseudouridine synthase A from Malacoplasma penetrans (strain HF-2) (Mycoplasma penetrans).